The chain runs to 444 residues: Methylenetetrahydrofolate--tRNA-(uracil-5-)-methyltransferase TrmFO (444 aa).

Residue 9-14 participates in FAD binding; it reads GAGMAG.

Belongs to the MnmG family. TrmFO subfamily. It depends on FAD as a cofactor.

Its subcellular location is the cytoplasm. The enzyme catalyses uridine(54) in tRNA + (6R)-5,10-methylene-5,6,7,8-tetrahydrofolate + NADH + H(+) = 5-methyluridine(54) in tRNA + (6S)-5,6,7,8-tetrahydrofolate + NAD(+). It catalyses the reaction uridine(54) in tRNA + (6R)-5,10-methylene-5,6,7,8-tetrahydrofolate + NADPH + H(+) = 5-methyluridine(54) in tRNA + (6S)-5,6,7,8-tetrahydrofolate + NADP(+). Its function is as follows. Catalyzes the folate-dependent formation of 5-methyl-uridine at position 54 (M-5-U54) in all tRNAs. This chain is Methylenetetrahydrofolate--tRNA-(uracil-5-)-methyltransferase TrmFO, found in Cereibacter sphaeroides (strain ATCC 17023 / DSM 158 / JCM 6121 / CCUG 31486 / LMG 2827 / NBRC 12203 / NCIMB 8253 / ATH 2.4.1.) (Rhodobacter sphaeroides).